Consider the following 91-residue polypeptide: Large ribosomal subunit protein eL43 (91 aa).

The C4-type zinc finger occupies 39-60 (CPFCGKDAMRRGAVGIWNCSKC).

This sequence belongs to the eukaryotic ribosomal protein eL43 family.

This is Large ribosomal subunit protein eL43 (rpl-37a) from Ostertagia ostertagi (Brown stomach worm).